The sequence spans 186 residues: UPF0301 protein HI_0304 (186 aa).

The protein belongs to the UPF0301 (AlgH) family.

The polypeptide is UPF0301 protein HI_0304 (Haemophilus influenzae (strain ATCC 51907 / DSM 11121 / KW20 / Rd)).